The following is a 524-amino-acid chain: Na(+)/H(+) antiporter NhaB (524 aa).

Helical transmembrane passes span 13–33, 98–118, 140–160, 239–259, 304–324, 325–345, 358–378, 448–468, and 479–499; these read FLGNSPDWYKLAIMGFLIINP, LLLVFMVAGIYFMKQLLLFVF, AFLSAFLDALTVIAVVISVSV, FFIRMLPVTLPVFICGLLVCL, AIIGVWLVLALALHLAEVGLV, GLSVIILATSFCGITNEHSLG, LTVFFAVVAVIIEQSLFTPII, ATPNGQAAFLFLLTSALAPLI, and ALPYTLVMTIVGLLGVEFLLV.

Belongs to the NhaB Na(+)/H(+) (TC 2.A.34) antiporter family.

It is found in the cell inner membrane. The catalysed reaction is 2 Na(+)(in) + 3 H(+)(out) = 2 Na(+)(out) + 3 H(+)(in). Functionally, na(+)/H(+) antiporter that extrudes sodium in exchange for external protons. This is Na(+)/H(+) antiporter NhaB from Yersinia pseudotuberculosis serotype O:3 (strain YPIII).